A 119-amino-acid chain; its full sequence is Defensin-like protein 260 (119 aa).

The first 24 residues, 1-24, serve as a signal peptide directing secretion; that stretch reads MKIASLKLLLLVSLLFAVTQNGIS. 4 disulfide bridges follow: C44–C99, C63–C79, C69–C83, and C73–C85.

This sequence belongs to the DEFL family.

The protein localises to the secreted. This Arabidopsis thaliana (Mouse-ear cress) protein is Defensin-like protein 260.